Reading from the N-terminus, the 424-residue chain is 23S rRNA (uracil(1939)-C(5))-methyltransferase RlmD (424 aa).

Residues 1–56 enclose the TRAM domain; sequence MEKFPAVTVFDLDYQGRGVAKIDGQVVFIEGALPDETVTFCKTSAKKQFIEAVVDE. The [4Fe-4S] cluster site is built by cysteine 69, cysteine 75, cysteine 78, and cysteine 155. Positions 255, 284, 289, 305, 333, and 354 each coordinate S-adenosyl-L-methionine. Residue cysteine 380 is the Nucleophile of the active site.

It belongs to the class I-like SAM-binding methyltransferase superfamily. RNA M5U methyltransferase family. RlmD subfamily.

The enzyme catalyses uridine(1939) in 23S rRNA + S-adenosyl-L-methionine = 5-methyluridine(1939) in 23S rRNA + S-adenosyl-L-homocysteine + H(+). In terms of biological role, catalyzes the formation of 5-methyl-uridine at position 1939 (m5U1939) in 23S rRNA. The protein is 23S rRNA (uracil(1939)-C(5))-methyltransferase RlmD of Dichelobacter nodosus (strain VCS1703A).